The following is a 330-amino-acid chain: Cathepsin S (330 aa).

The N-terminal stretch at 1 to 17 (MKQLVCVLFVCSSAVTQ) is a signal peptide. The propeptide at 18-114 (LHKDPTLDHH…ITYKSNPNQM (97 aa)) is activation peptide. Residue Asn104 is glycosylated (N-linked (GlcNAc...) asparagine). Disulfide bonds link Cys126–Cys223, Cys136–Cys179, Cys170–Cys212, and Cys271–Cys319. Residue Cys139 is part of the active site. Catalysis depends on residues His277 and Asn297.

Belongs to the peptidase C1 family.

The protein localises to the lysosome. The protein resides in the secreted. Its subcellular location is the cytoplasmic vesicle. It is found in the phagosome. The enzyme catalyses Similar to cathepsin L, but with much less activity on Z-Phe-Arg-|-NHMec, and more activity on the Z-Val-Val-Arg-|-Xaa compound.. In terms of biological role, thiol protease. Key protease responsible for the removal of the invariant chain from MHC class II molecules and MHC class II antigen presentation. The bond-specificity of this proteinase is in part similar to the specificities of cathepsin L. This is Cathepsin S (CTSS) from Saimiri boliviensis boliviensis (Bolivian squirrel monkey).